A 36-amino-acid polypeptide reads, in one-letter code: Serum amyloid P-component (36 aa).

The Pentraxin (PTX) domain occupies 6 to 36; that stretch reads SGKVFVIPMATSTSHVKLHARVSEPISAMTM.

The protein belongs to the pentraxin family. As to quaternary structure, homopentamer. Discoid arrangement of 5 covalently bound subunits. It depends on Ca(2+) as a cofactor.

The protein resides in the secreted. In Salmo salar (Atlantic salmon), this protein is Serum amyloid P-component.